The following is a 373-amino-acid chain: P2Y purinoceptor 1 (373 aa).

At 1-51 (MTEVLWPAAPNGTDAAFLASPGFHWGNSTATSTAAAAAPFRCALTKTGFQF) the chain is on the extracellular side. Residues Asn-11 and Asn-27 are each glycosylated (N-linked (GlcNAc...) asparagine). Disulfide bonds link Cys-42/Cys-296 and Cys-124/Cys-202. ADP is bound at residue Lys-46. A helical membrane pass occupies residues 52 to 74 (YYLPAVYIVVFIIGFLGNSIAIW). Residues 75–87 (MFVFHMKPWSGIS) lie on the Cytoplasmic side of the membrane. A helical membrane pass occupies residues 88 to 109 (VYMFNLALADFLYVLTLPALIF). Residues 110–125 (YYFNKTNWIFGDAMCK) lie on the Extracellular side of the membrane. Asn-113 carries an N-linked (GlcNAc...) asparagine glycan. A helical transmembrane segment spans residues 126 to 147 (LQRFIFHVNLYGSILFLTCISA). Topologically, residues 148–166 (HRYSGVVYPLKSLGRLKKK) are cytoplasmic. The helical transmembrane segment at 167-188 (NAVYISVLVWLIVVVAISPILF) threads the bilayer. Over 189–214 (YSGTGIRKNKTITCYDTTSDEYLRSY) the chain is Extracellular. The N-linked (GlcNAc...) asparagine glycan is linked to Asn-197. 203–205 (YDT) contributes to the ADP binding site. Residues 215 to 237 (FIYSMCTTVAMFCVPLVLILGCY) form a helical membrane-spanning segment. Over 238–260 (GLIVRALIYKDLDNSPLRRKSIY) the chain is Cytoplasmic. The helical transmembrane segment at 261-284 (LVIIVLTVFAVSYIPFHVMKTMNL) threads the bilayer. ADP is bound by residues 283-287 (NLRAR), 303-306 (YATY), and Arg-310. The Extracellular portion of the chain corresponds to 285 to 303 (RARLDFQTPEMCTFNDRVY). The helical transmembrane segment at 304-325 (ATYQVTRGLASLNSCVDPILYF) threads the bilayer. Topologically, residues 326 to 373 (LAGDTFRRRLSRATRKASRRSEANLQSKSEDMTLNILSEFKQNGDTSL) are cytoplasmic.

Belongs to the G-protein coupled receptor 1 family.

Its subcellular location is the cell membrane. Receptor for extracellular adenine nucleotides such as ADP. In platelets, binding to ADP leads to mobilization of intracellular calcium ions via activation of phospholipase C, a change in platelet shape, and ultimately platelet aggregation. The chain is P2Y purinoceptor 1 (P2RY1) from Cavia porcellus (Guinea pig).